The sequence spans 708 residues: Outer capsid protein mu-1 (708 aa).

G2 is lipidated: N-myristoyl glycine; by host. N3, N12, N81, N110, N458, N482, N528, and N659 each carry an N-linked (GlcNAc...) asparagine; by host glycan. The segment at 675–708 (PKPDCPTSGDSGESSNRRVKRDSYAGVVKRGYTR) is disordered.

It belongs to the orthoreovirus mu-1 protein family. As to quaternary structure, heterohexamer of three sigma-3 and three Mu-1 proteins. Post-translationally, cleaved during the endosomal proteolytic disassembly of the outer capsid. Mu-1 is proteolytically cleaved into mu-1N and mu-1C during the maturation step to generate the ISVP. Cleavage of mu-1 to mu-1C is dependent on myristoylation and binding to sigma-3 protein. Mu-1C is further cleaved into delta (59 kDa), and phi (13 kDa) segments during entry into the host cell cytoplasm. Mu-1 and mu-1N are N-terminally myristoylated. This acylation is essential for the membrane fusion activity.

Its subcellular location is the virion. The protein localises to the host cell membrane. The protein resides in the host endoplasmic reticulum. It is found in the host mitochondrion. Major outer capsid protein involved in host cell membrane penetration. In the endocytic compartment, outer-capsid protein sigma-3 is removed by cathepsin proteases, which exposes the viral membrane-penetration protein mu-1. Both myristoylated peptides mu-1N and phi are released during infectious subvirion particles (ISVP) formation in the endosome. They associate with host membranes and mu-1N induces permeabilization and delivery of transcriptionally active viral particles into the host cell cytoplasm. Seems to induce apoptosis in the host cell. Its function is as follows. The viral outer shell polypeptides, of which mu-1 is one, impose structural constraints that prevent elongation of nascent transcripts by the RNA-dependent RNA polymerase lambda-3. The protein is Outer capsid protein mu-1 (M2) of Mammalia (T3D).